A 227-amino-acid chain; its full sequence is Pyridoxine-5'-phosphate oxidase (227 aa).

A pyridoxal 5'-phosphate-binding site is contributed by 20 to 23 (RKDY). 75–78 (RVVL) contributes to the FMN binding site. Lys-80 lines the pyridoxal 5'-phosphate pocket. FMN is bound by residues 90-91 (YT), 96-97 (RK), and Gln-117. Pyridoxal 5'-phosphate contacts are provided by Tyr-135, Arg-139, and Ser-143. FMN is bound by residues 152–153 (FQ) and Trp-197. 203–205 (RIH) contributes to the pyridoxal 5'-phosphate binding site. Arg-207 is a binding site for FMN.

Belongs to the pyridoxamine 5'-phosphate oxidase family. In terms of assembly, homodimer. FMN serves as cofactor.

It catalyses the reaction pyridoxamine 5'-phosphate + O2 + H2O = pyridoxal 5'-phosphate + H2O2 + NH4(+). The catalysed reaction is pyridoxine 5'-phosphate + O2 = pyridoxal 5'-phosphate + H2O2. It participates in cofactor metabolism; pyridoxal 5'-phosphate salvage; pyridoxal 5'-phosphate from pyridoxamine 5'-phosphate: step 1/1. The protein operates within cofactor metabolism; pyridoxal 5'-phosphate salvage; pyridoxal 5'-phosphate from pyridoxine 5'-phosphate: step 1/1. In terms of biological role, catalyzes the oxidation of either pyridoxine 5'-phosphate (PNP) or pyridoxamine 5'-phosphate (PMP) into pyridoxal 5'-phosphate (PLP). The chain is Pyridoxine-5'-phosphate oxidase (pnpo) from Dictyostelium discoideum (Social amoeba).